A 186-amino-acid polypeptide reads, in one-letter code: MSEPASISAAIAGRYATAIFDLAQEAKGIDALSADVDALTAALAGSAELRDLISSPVYTREEQGDAIAAVAAKMGLSAPLANGLKLMATKRRLFALPQLLKGLAAAIAEAKGEMTADVTSATALSAAQAEKLAATLAKQTGKTVKLNVAVDESLIGGMIVKLGSRMIDTTVKAKLASLQNAMKEVG.

Belongs to the ATPase delta chain family. As to quaternary structure, F-type ATPases have 2 components, F(1) - the catalytic core - and F(0) - the membrane proton channel. F(1) has five subunits: alpha(3), beta(3), gamma(1), delta(1), epsilon(1). F(0) has three main subunits: a(1), b(2) and c(10-14). The alpha and beta chains form an alternating ring which encloses part of the gamma chain. F(1) is attached to F(0) by a central stalk formed by the gamma and epsilon chains, while a peripheral stalk is formed by the delta and b chains.

It localises to the cellular chromatophore membrane. F(1)F(0) ATP synthase produces ATP from ADP in the presence of a proton or sodium gradient. F-type ATPases consist of two structural domains, F(1) containing the extramembraneous catalytic core and F(0) containing the membrane proton channel, linked together by a central stalk and a peripheral stalk. During catalysis, ATP synthesis in the catalytic domain of F(1) is coupled via a rotary mechanism of the central stalk subunits to proton translocation. Its function is as follows. This protein is part of the stalk that links CF(0) to CF(1). It either transmits conformational changes from CF(0) to CF(1) or is implicated in proton conduction. The protein is ATP synthase subunit delta of Rhodobacter capsulatus (Rhodopseudomonas capsulata).